A 610-amino-acid chain; its full sequence is Aspartate--tRNA(Asp/Asn) ligase (610 aa).

Glu-177 serves as a coordination point for L-aspartate. Residues 201–204 (QLFK) form an aspartate region. L-aspartate is bound at residue Arg-223. Residues 223–225 (RDE) and Gln-232 contribute to the ATP site. His-461 is a binding site for L-aspartate. Residue Glu-499 participates in ATP binding. Arg-506 lines the L-aspartate pocket. Residue 551–554 (GVDR) coordinates ATP.

It belongs to the class-II aminoacyl-tRNA synthetase family. Type 1 subfamily. Homodimer.

The protein resides in the cytoplasm. It catalyses the reaction tRNA(Asx) + L-aspartate + ATP = L-aspartyl-tRNA(Asx) + AMP + diphosphate. Aspartyl-tRNA synthetase with relaxed tRNA specificity since it is able to aspartylate not only its cognate tRNA(Asp) but also tRNA(Asn). Reaction proceeds in two steps: L-aspartate is first activated by ATP to form Asp-AMP and then transferred to the acceptor end of tRNA(Asp/Asn). The sequence is that of Aspartate--tRNA(Asp/Asn) ligase from Parasynechococcus marenigrum (strain WH8102).